The sequence spans 729 residues: Pentatricopeptide repeat-containing protein At5g01110 (729 aa).

The segment at 26–45 is disordered; it reads TSSSPVFEPSSSSSSSSSSA. The span at 27 to 45 shows a compositional bias: low complexity; it reads SSSPVFEPSSSSSSSSSSA. 17 PPR repeats span residues 112-147, 164-198, 199-233, 234-268, 269-303, 304-338, 339-373, 374-408, 409-443, 444-478, 479-513, 514-548, 549-583, 584-618, 619-649, 656-690, and 691-725; these read TSLS…GVSR, NDSV…GFTV, SIDA…GVGI, NVYT…GVYP, DIVT…GFSP, GVYT…GLSP, DSTT…DVVP, DLVC…GLIP, DNVI…GCAM, DVVT…ALFP, DSYT…RIRL, DVVT…EILP, TPIS…NIKP, TVMI…GFVP, DCIS…MEEE, DVFT…GVNP, and DRST…GFSP.

It belongs to the PPR family. P subfamily.

The sequence is that of Pentatricopeptide repeat-containing protein At5g01110 from Arabidopsis thaliana (Mouse-ear cress).